Consider the following 390-residue polypeptide: Cell division protein FtsZ (390 aa).

GTP is bound by residues 21–25 (GGGNN), 108–110 (GTG), glutamate 139, arginine 143, and aspartate 187. Positions 315 to 390 (FDDKPTSHGR…EERRSRRTRR (76 aa)) are disordered. Polar residues predominate over residues 326-360 (SGSTGFGTSVNTSSNATSKDESFTSNSSNAQATDS). Over residues 361–384 (VSERTHTTKEDDIPSFIRNREERR) the composition is skewed to basic and acidic residues.

The protein belongs to the FtsZ family. Homodimer. Polymerizes to form a dynamic ring structure in a strictly GTP-dependent manner. Interacts directly with several other division proteins.

The protein resides in the cytoplasm. Essential cell division protein that forms a contractile ring structure (Z ring) at the future cell division site. The regulation of the ring assembly controls the timing and the location of cell division. One of the functions of the FtsZ ring is to recruit other cell division proteins to the septum to produce a new cell wall between the dividing cells. Binds GTP and shows GTPase activity. The protein is Cell division protein FtsZ of Staphylococcus aureus (strain NCTC 8325 / PS 47).